A 727-amino-acid polypeptide reads, in one-letter code: FACT complex subunit Ssrp1 (727 aa).

Disordered regions lie at residues 458–565 (AEAR…AFML) and 596–727 (ELKD…EGSD). 2 stretches are compositionally biased toward acidic residues: residues 464 to 479 (EEEDDDGDDSDEESTD) and 487 to 508 (NESDVAEEYDSNVEDDSDDDSD). The span at 510 to 519 (SGGGGDGGTD) shows a compositional bias: gly residues. Basic and acidic residues-rich tracts occupy residues 529–555 (KKNEKKEKTHKEKEKIKKPTKKKDTGK), 596–620 (ELKDKSKWEEAANKDKIRYQEEMRN), and 675–703 (DQEKVKEIPKKKNKSTAEDKDKNSKKSES). Residues 556 to 622 (PKRGTSAFML…RYQEEMRNYK (67 aa)) constitute a DNA-binding region (HMG box). Over residues 704–727 (EGGDSDDASNASEDDDEEEDEGSD) the composition is skewed to acidic residues.

This sequence belongs to the SSRP1 family. Component of the FACT complex, a stable heterodimer of dre4/spt16 and Ssrp.

Its subcellular location is the nucleus. The protein localises to the chromosome. It localises to the nucleolus. Functionally, component of the FACT complex, a general chromatin factor that acts to reorganize nucleosomes. The FACT complex is involved in multiple processes that require DNA as a template such as mRNA elongation, DNA replication and DNA repair. During transcription elongation the FACT complex acts as a histone chaperone that both destabilizes and restores nucleosomal structure. It facilitates the passage of RNA polymerase II and transcription by promoting the dissociation of one histone H2A-H2B dimer from the nucleosome, then subsequently promotes the reestablishment of the nucleosome following the passage of RNA polymerase II. Binds specifically to single-stranded DNA and RNA with highest affinity for nucleotides G and U. The FACT complex is required for expression of Hox genes. The sequence is that of FACT complex subunit Ssrp1 (Ssrp) from Drosophila pseudoobscura pseudoobscura (Fruit fly).